The following is a 108-amino-acid chain: Tetrahydromethanopterin S-methyltransferase subunit B (108 aa).

Residues 80–100 (AFYGIVVGLAFSGLLALIIFI) traverse the membrane as a helical segment.

The protein belongs to the MtrB family. In terms of assembly, the complex is composed of 8 subunits; MtrA, MtrB, MtrC, MtrD, MtrE, MtrF, MtrG and MtrH.

The protein resides in the cell membrane. The enzyme catalyses 5-methyl-5,6,7,8-tetrahydromethanopterin + coenzyme M + 2 Na(+)(in) = 5,6,7,8-tetrahydromethanopterin + methyl-coenzyme M + 2 Na(+)(out). It functions in the pathway one-carbon metabolism; methanogenesis from CO(2); methyl-coenzyme M from 5,10-methylene-5,6,7,8-tetrahydromethanopterin: step 2/2. In terms of biological role, part of a complex that catalyzes the formation of methyl-coenzyme M and tetrahydromethanopterin from coenzyme M and methyl-tetrahydromethanopterin. This is an energy-conserving, sodium-ion translocating step. The protein is Tetrahydromethanopterin S-methyltransferase subunit B of Methanosarcina acetivorans (strain ATCC 35395 / DSM 2834 / JCM 12185 / C2A).